A 132-amino-acid chain; its full sequence is S-protein homolog 19 (132 aa).

The N-terminal stretch at 1–26 is a signal peptide; it reads MSGSLAFHIIMSVTFMVFFFGGLCEA. Asn87 is a glycosylation site (N-linked (GlcNAc...) asparagine).

Belongs to the plant self-incompatibility (S1) protein family.

The protein resides in the secreted. This Arabidopsis thaliana (Mouse-ear cress) protein is S-protein homolog 19.